The sequence spans 327 residues: Putative pumilio homolog 19 (327 aa).

The 324-residue stretch at Met-1 to Arg-324 folds into the PUM-HD domain. 6 Pumilio repeats span residues Ser-79–Ala-114, Ile-115–Glu-149, Arg-150–Leu-185, Glu-186–Val-222, Asn-223–Gly-260, and Cys-261–Trp-295.

It is found in the cytoplasm. Sequence-specific RNA-binding protein that regulates translation and mRNA stability by binding the 3'-UTR of target mRNAs. The protein is Putative pumilio homolog 19 (APUM19) of Arabidopsis thaliana (Mouse-ear cress).